The following is a 297-amino-acid chain: Protoheme IX farnesyltransferase (297 aa).

The next 9 membrane-spanning stretches (helical) occupy residues 16-36 (VVAL…PGVP), 45-65 (VLGF…NQLL), 93-113 (VFAS…VNLI), 114-134 (TAVL…VYLK), 141-161 (IVIG…AVTG), 172-192 (SLLV…LAIF), 223-243 (VVLA…AFYL), 244-264 (GGAI…LDPP), and 277-297 (IVYL…LPWL).

This sequence belongs to the UbiA prenyltransferase family. Protoheme IX farnesyltransferase subfamily.

The protein localises to the cell inner membrane. It carries out the reaction heme b + (2E,6E)-farnesyl diphosphate + H2O = Fe(II)-heme o + diphosphate. The protein operates within porphyrin-containing compound metabolism; heme O biosynthesis; heme O from protoheme: step 1/1. In terms of biological role, converts heme B (protoheme IX) to heme O by substitution of the vinyl group on carbon 2 of heme B porphyrin ring with a hydroxyethyl farnesyl side group. This Stenotrophomonas maltophilia (strain R551-3) protein is Protoheme IX farnesyltransferase.